The sequence spans 280 residues: UPF0750 membrane protein YitT (280 aa).

4 consecutive transmembrane segments (helical) span residues 9 to 29, 54 to 74, 80 to 100, and 151 to 171; these read LLIV…FLIP, FYIS…ILGW, SFTV…GILP, and VGTY…LLQG.

It belongs to the UPF0750 family.

The protein resides in the cell membrane. This Bacillus subtilis (strain 168) protein is UPF0750 membrane protein YitT (yitT).